A 524-amino-acid chain; its full sequence is Zinc finger CCCH domain-containing protein 37 (524 aa).

The disordered stretch occupies residues 19 to 39 (ASTVSPAPPPPQQPLPPKTGL). The span at 24–35 (PAPPPPQQPLPP) shows a compositional bias: pro residues. 3 consecutive C3H1-type zinc fingers follow at residues 174–202 (RAGE…HPIW), 225–253 (RPGE…HPRE), and 268–296 (RPSE…HPKD). The disordered stretch occupies residues 300–319 (PSSSQDIGSSVGLTSEPDAT). 3 consecutive C3H1-type zinc fingers follow at residues 340 to 368 (RSGE…HPER), 420 to 448 (RPGQ…HPAD), and 473 to 501 (REGA…HPPP). The tract at residues 505 to 524 (MAKTTSEADAAGATNTDTTQ) is disordered. Over residues 512-524 (ADAAGATNTDTTQ) the composition is skewed to low complexity.

As to quaternary structure, interacts with HEN4. Interacts with FLK and PEP. In terms of tissue distribution, highly expressed in inflorescences, at intermediate levels in leaves and stems and at lower levels in roots.

It is found in the nucleus speckle. Functionally, involved in flower development. Functions in floral reproductive organ identity by binding AGAMOUS (AG) pre-mRNA and promoting its processing. Functions in association with HUA2 and HEN4. The polypeptide is Zinc finger CCCH domain-containing protein 37 (HUA1) (Arabidopsis thaliana (Mouse-ear cress)).